The primary structure comprises 195 residues: GTP cyclohydrolase 1 (195 aa).

Positions 85, 88, and 157 each coordinate Zn(2+).

It belongs to the GTP cyclohydrolase I family. As to quaternary structure, toroid-shaped homodecamer, composed of two pentamers of five dimers.

The catalysed reaction is GTP + H2O = 7,8-dihydroneopterin 3'-triphosphate + formate + H(+). The protein operates within cofactor biosynthesis; 7,8-dihydroneopterin triphosphate biosynthesis; 7,8-dihydroneopterin triphosphate from GTP: step 1/1. This is GTP cyclohydrolase 1 from Clostridium acetobutylicum (strain ATCC 824 / DSM 792 / JCM 1419 / IAM 19013 / LMG 5710 / NBRC 13948 / NRRL B-527 / VKM B-1787 / 2291 / W).